The following is a 421-amino-acid chain: E3 ubiquitin-protein ligase MARCHF4 (421 aa).

An N-terminal signal peptide occupies residues 1–16 (MLLAIGVIVWCWGLLS). Residues 60–79 (ELNAEGNATSSATESHSLAN) form a disordered region. The segment covering 65–77 (GNATSSATESHSL) has biased composition (polar residues). Residues 135–195 (DSGVRTPLCR…ELCYYKYQVI (61 aa)) form an RING-CH-type zinc finger. Zn(2+) contacts are provided by Cys-143, Cys-146, Cys-159, Cys-161, His-169, Cys-172, Cys-185, and Cys-188. 2 helical membrane passes run 218–238 (IAAAVLGSLFLIASISWLVWS) and 252–272 (LFQICYAMYGFMDLVCIALIV). Disordered regions lie at residues 319–385 (PLTH…LPDH) and 401–421 (QEPRGQTSNSNRELVMRVTTV). Polar residues-rich tracts occupy residues 367–380 (TEPQDSSEPSNGQP) and 403–412 (PRGQTSNSNR).

Its subcellular location is the golgi apparatus membrane. It carries out the reaction S-ubiquitinyl-[E2 ubiquitin-conjugating enzyme]-L-cysteine + [acceptor protein]-L-lysine = [E2 ubiquitin-conjugating enzyme]-L-cysteine + N(6)-ubiquitinyl-[acceptor protein]-L-lysine.. It functions in the pathway protein modification; protein ubiquitination. In terms of biological role, E3 ubiquitin-protein ligase. E3 ubiquitin ligases accept ubiquitin from an E2 ubiquitin-conjugating enzyme in the form of a thioester and then directly transfer the ubiquitin to targeted substrates. The chain is E3 ubiquitin-protein ligase MARCHF4 (marchf4) from Danio rerio (Zebrafish).